We begin with the raw amino-acid sequence, 202 residues long: DNA polymerase III subunit epsilon (202 aa).

Residues D23 and E25 each contribute to the a divalent metal cation site. Positions 23 and 25 each coordinate substrate. H162 (proton acceptor) is an active-site residue. An a divalent metal cation-binding site is contributed by D167. D167 is a substrate binding site.

In terms of assembly, DNA polymerase III contains a core (composed of alpha, epsilon and theta chains) that associates with a tau subunit. This core dimerizes to form the POLIII' complex. PolIII' associates with the gamma complex (composed of gamma, delta, delta', psi and chi chains) and with the beta chain to form the complete DNA polymerase III complex. Mg(2+) serves as cofactor. Mn(2+) is required as a cofactor.

It catalyses the reaction DNA(n) + a 2'-deoxyribonucleoside 5'-triphosphate = DNA(n+1) + diphosphate. In terms of biological role, DNA polymerase III is a complex, multichain enzyme responsible for most of the replicative synthesis in bacteria. The epsilon subunit contain the editing function and is a proofreading 3'-5' exonuclease. This chain is DNA polymerase III subunit epsilon (dnaQ), found in Aquifex aeolicus (strain VF5).